The sequence spans 555 residues: Membrane protein insertase YidC (555 aa).

Helical transmembrane passes span 7–24 (VLWVIFFMSAVMLYDNWQ), 367–387 (WGWSIVLLTLLIKAVFFPLSA), 437–457 (LPVVIQIPVFISLYWVLLASV), 476–496 (PFFILPVLMAVSMYVQTSLNP), and 511–531 (PIAFSVMFFFFPAGLVLYYVV).

Belongs to the OXA1/ALB3/YidC family. Type 1 subfamily. In terms of assembly, interacts with the Sec translocase complex via SecD. Specifically interacts with transmembrane segments of nascent integral membrane proteins during membrane integration.

It is found in the cell inner membrane. Its function is as follows. Required for the insertion and/or proper folding and/or complex formation of integral membrane proteins into the membrane. Involved in integration of membrane proteins that insert both dependently and independently of the Sec translocase complex, as well as at least some lipoproteins. Aids folding of multispanning membrane proteins. The chain is Membrane protein insertase YidC from Burkholderia lata (strain ATCC 17760 / DSM 23089 / LMG 22485 / NCIMB 9086 / R18194 / 383).